The sequence spans 387 residues: Monomeric sarcosine oxidase (387 aa).

6-36 (DVIVVGAGSMGMAAGYYLAKQGVKTLLVDSF) serves as a coordination point for FAD. Position 316 is an S-8alpha-FAD cysteine (Cys-316).

It belongs to the MSOX/MTOX family. MSOX subfamily. In terms of assembly, monomer. Requires FAD as cofactor.

Its subcellular location is the cytoplasm. It catalyses the reaction sarcosine + O2 + H2O = formaldehyde + glycine + H2O2. Functionally, catalyzes the oxidative demethylation of sarcosine. The chain is Monomeric sarcosine oxidase (soxA) from Bacillus sp. (strain NS-129).